The sequence spans 232 residues: N-(5'-phosphoribosyl)anthranilate isomerase (232 aa).

This sequence belongs to the TrpF family.

It catalyses the reaction N-(5-phospho-beta-D-ribosyl)anthranilate = 1-(2-carboxyphenylamino)-1-deoxy-D-ribulose 5-phosphate. Its pathway is amino-acid biosynthesis; L-tryptophan biosynthesis; L-tryptophan from chorismate: step 3/5. This is N-(5'-phosphoribosyl)anthranilate isomerase (TRP1) from Lipomyces starkeyi (Oleaginous yeast).